The chain runs to 256 residues: H-2 class II histocompatibility antigen, A-B alpha chain (256 aa).

The first 23 residues, 1–23, serve as a signal peptide directing secretion; that stretch reads MPRSRALILGVLALTTMLSLCGG. The interval 24–111 is alpha-1; that stretch reads EDDIEADHVG…KRSNSTPATN (88 aa). The Extracellular segment spans residues 24 to 218; the sequence is EDDIEADHVG…IPAPMSELTE (195 aa). Residues 112-205 form an alpha-2 region; that stretch reads EAPQATVFPK…GLEEPVLKHW (94 aa). In terms of domain architecture, Ig-like C1-type spans 114-206; it reads PQATVFPKSP…LEEPVLKHWE (93 aa). The cysteines at positions 134 and 190 are disulfide-linked. A glycan (N-linked (GlcNAc...) asparagine) is linked at Asn-145. The interval 206–218 is connecting peptide; the sequence is EPEIPAPMSELTE. Residues 219 to 244 form a helical membrane-spanning segment; sequence TVVCALGLSVGLVGIVVGTIFIIQGL. At 245–256 the chain is on the cytoplasmic side; that stretch reads RSGGTSRHPGPL.

The protein belongs to the MHC class II family.

It is found in the membrane. This chain is H-2 class II histocompatibility antigen, A-B alpha chain (H2-Aa), found in Mus musculus (Mouse).